The chain runs to 153 residues: Ribosome maturation factor RimP (153 aa).

It belongs to the RimP family.

Its subcellular location is the cytoplasm. Required for maturation of 30S ribosomal subunits. This is Ribosome maturation factor RimP from Trichormus variabilis (strain ATCC 29413 / PCC 7937) (Anabaena variabilis).